A 329-amino-acid chain; its full sequence is Phytochromobilin:ferredoxin oxidoreductase, chloroplastic (329 aa).

Residues 1–45 constitute a chloroplast transit peptide; that stretch reads MALSMEFGFSIGSCFKAPNPPVLISASPNKINFTLRRRKKRFLLR.

Belongs to the HY2 family.

It localises to the plastid. The protein localises to the chloroplast. It catalyses the reaction (3Z)-phytochromobilin + 2 oxidized [2Fe-2S]-[ferredoxin] = biliverdin IXalpha + 2 reduced [2Fe-2S]-[ferredoxin] + 2 H(+). In terms of biological role, catalyzes the two-electron reduction of biliverdin IX-alpha to the tetrapyrrole chromophore phytochromobilin (PPhiB). In Arabidopsis thaliana (Mouse-ear cress), this protein is Phytochromobilin:ferredoxin oxidoreductase, chloroplastic.